The chain runs to 383 residues: S-adenosylmethionine synthase (383 aa).

His15 provides a ligand contact to ATP. Asp17 contributes to the Mg(2+) binding site. Glu43 contacts K(+). L-methionine contacts are provided by Glu56 and Gln99. The interval 99–109 (QSPDINQGVDR) is flexible loop. Residues 164 to 166 (DAK), 230 to 231 (RF), Asp239, 245 to 246 (RK), Ala262, and Lys266 each bind ATP. Asp239 contributes to the L-methionine binding site. Lys270 provides a ligand contact to L-methionine.

This sequence belongs to the AdoMet synthase family. As to quaternary structure, homotetramer; dimer of dimers. Mg(2+) serves as cofactor. It depends on K(+) as a cofactor.

The protein resides in the cytoplasm. It catalyses the reaction L-methionine + ATP + H2O = S-adenosyl-L-methionine + phosphate + diphosphate. The protein operates within amino-acid biosynthesis; S-adenosyl-L-methionine biosynthesis; S-adenosyl-L-methionine from L-methionine: step 1/1. Its function is as follows. Catalyzes the formation of S-adenosylmethionine (AdoMet) from methionine and ATP. The overall synthetic reaction is composed of two sequential steps, AdoMet formation and the subsequent tripolyphosphate hydrolysis which occurs prior to release of AdoMet from the enzyme. This chain is S-adenosylmethionine synthase, found in Pectobacterium carotovorum subsp. carotovorum (strain PC1).